A 134-amino-acid chain; its full sequence is DNA-binding protein H-NS homolog (134 aa).

The interval 106–134 (HKTWTGQGRTPRPIQNALNKGKSLSDFEI) is disordered. The DNA-binding element occupies 112 to 117 (QGRTPR).

It belongs to the histone-like protein H-NS family. Homodimer that oligomerizes on DNA into higher-order complexes that form bridges between disparate regions of DNA compacting it.

The protein localises to the cytoplasm. Its subcellular location is the nucleoid. Functionally, a DNA-binding protein implicated in transcriptional repression and chromosome organization and compaction. Binds nucleation sites in AT-rich DNA and bridges them, forming higher-order nucleoprotein complexes and condensing the chromosome. As many horizontally transferred genes are AT-rich, it plays a central role in silencing foreign genes. A subset of genes are repressed by H-NS in association with other proteins. The polypeptide is DNA-binding protein H-NS homolog (hns) (Haemophilus influenzae (strain ATCC 51907 / DSM 11121 / KW20 / Rd)).